A 690-amino-acid polypeptide reads, in one-letter code: Methionine--tRNA ligase (690 aa).

Residues Pro20–His30 carry the 'HIGH' region motif. 4 residues coordinate Zn(2+): Cys151, Cys154, Cys164, and Cys167. Residues Lys337 to Ser341 carry the 'KMSKS' region motif. Residue Lys340 coordinates ATP. In terms of domain architecture, tRNA-binding spans Asp589 to Met690.

Belongs to the class-I aminoacyl-tRNA synthetase family. MetG type 1 subfamily. Homodimer. Zn(2+) serves as cofactor.

The protein resides in the cytoplasm. The catalysed reaction is tRNA(Met) + L-methionine + ATP = L-methionyl-tRNA(Met) + AMP + diphosphate. Functionally, is required not only for elongation of protein synthesis but also for the initiation of all mRNA translation through initiator tRNA(fMet) aminoacylation. This is Methionine--tRNA ligase from Vibrio vulnificus (strain CMCP6).